The sequence spans 314 residues: Lipoyl synthase (314 aa).

[4Fe-4S] cluster is bound by residues C60, C65, C71, C86, C90, C93, and S300. A Radical SAM core domain is found at 72–289 (FRKGTATFMI…RQFGLSIGFS (218 aa)).

It belongs to the radical SAM superfamily. Lipoyl synthase family. [4Fe-4S] cluster is required as a cofactor.

It localises to the cytoplasm. The enzyme catalyses [[Fe-S] cluster scaffold protein carrying a second [4Fe-4S](2+) cluster] + N(6)-octanoyl-L-lysyl-[protein] + 2 oxidized [2Fe-2S]-[ferredoxin] + 2 S-adenosyl-L-methionine + 4 H(+) = [[Fe-S] cluster scaffold protein] + N(6)-[(R)-dihydrolipoyl]-L-lysyl-[protein] + 4 Fe(3+) + 2 hydrogen sulfide + 2 5'-deoxyadenosine + 2 L-methionine + 2 reduced [2Fe-2S]-[ferredoxin]. The protein operates within protein modification; protein lipoylation via endogenous pathway; protein N(6)-(lipoyl)lysine from octanoyl-[acyl-carrier-protein]: step 2/2. Catalyzes the radical-mediated insertion of two sulfur atoms into the C-6 and C-8 positions of the octanoyl moiety bound to the lipoyl domains of lipoate-dependent enzymes, thereby converting the octanoylated domains into lipoylated derivatives. The polypeptide is Lipoyl synthase (Pelobacter propionicus (strain DSM 2379 / NBRC 103807 / OttBd1)).